The primary structure comprises 166 residues: Lipoprotein signal peptidase (166 aa).

A run of 3 helical transmembrane segments spans residues 12 to 32 (WLWL…LILQ), 70 to 90 (WFFA…MYRS), and 102 to 122 (ALII…GFVV). Catalysis depends on residues aspartate 123 and aspartate 141. Residues 137–157 (FNLADSAICIGAALIVLEGFL) traverse the membrane as a helical segment.

It belongs to the peptidase A8 family.

It localises to the cell inner membrane. The catalysed reaction is Release of signal peptides from bacterial membrane prolipoproteins. Hydrolyzes -Xaa-Yaa-Zaa-|-(S,diacylglyceryl)Cys-, in which Xaa is hydrophobic (preferably Leu), and Yaa (Ala or Ser) and Zaa (Gly or Ala) have small, neutral side chains.. It participates in protein modification; lipoprotein biosynthesis (signal peptide cleavage). In terms of biological role, this protein specifically catalyzes the removal of signal peptides from prolipoproteins. This chain is Lipoprotein signal peptidase, found in Salmonella agona (strain SL483).